The chain runs to 328 residues: dTDP-4-dehydrorhamnose 3,5-epimerase (328 aa).

Substrate contacts are provided by residues R23, E28, 46 to 48 (QEN), and R58. The active-site Proton acceptor is the H61. The substrate site is built by K70 and H117. Y130 functions as the Proton donor in the catalytic mechanism. Residues E141 and K166 each contribute to the substrate site.

This sequence belongs to the dTDP-4-dehydrorhamnose 3,5-epimerase family. As to quaternary structure, homodimer.

It carries out the reaction dTDP-4-dehydro-6-deoxy-alpha-D-glucose = dTDP-4-dehydro-beta-L-rhamnose. The protein operates within carbohydrate biosynthesis; dTDP-L-rhamnose biosynthesis. It participates in bacterial outer membrane biogenesis; LPS O-antigen biosynthesis. In terms of biological role, catalyzes the epimerization of the C3' and C5'positions of dTDP-6-deoxy-D-xylo-4-hexulose, forming dTDP-6-deoxy-L-lyxo-4-hexulose. The protein is dTDP-4-dehydrorhamnose 3,5-epimerase (rfbC) of Neisseria gonorrhoeae.